Consider the following 381-residue polypeptide: Probable cyclic AMP-AMP-GMP nucleotide synthase (381 aa).

2 residues coordinate GTP: Ser-53 and Arg-56. Residues Asp-69 and Asp-71 contribute to the active site. The Mg(2+) site is built by Asp-69 and Asp-71. Arg-109 contacts GTP. Asp-121 is a catalytic residue. Mg(2+) is bound by residues Asp-121 and Asp-196. Residues Arg-197, Arg-204, Thr-205, Gln-210, and Arg-307 each contribute to the GTP site. The tract at residues 348 to 381 (GTKFPFPGPQGGDRSGGFTAPTQPAEPQKTGRFA) is disordered.

It belongs to the CD-NTase family. D02 subfamily. The cofactor is Mg(2+).

The enzyme catalyses GTP + 2 ATP = 3',3',3'-cAAG + 3 diphosphate. Functionally, cyclic nucleotide synthase (second messenger synthase) of a CBASS antivirus system. CBASS (cyclic oligonucleotide-based antiphage signaling system) provides immunity against bacteriophage. The CD-NTase protein synthesizes cyclic nucleotides in response to infection; these serve as specific second messenger signals. The signals activate a diverse range of effectors, leading to bacterial cell death and thus abortive phage infection. Cyclic nucleotide synthase, synthesizes a tricyclic nucleotide with AMP and GMP moieties, probably 3',3',3'-cyclic AMP-AMP-GMP (3'3'3'-cAAG). Controls the activity of the associated CBASS effector protein. In Salmonella paratyphi B (Salmonella enterica subsp. enterica serovar Paratyphi B), this protein is Probable cyclic AMP-AMP-GMP nucleotide synthase.